The following is a 233-amino-acid chain: Preprocaerulein type-4 (233 aa).

An N-terminal signal peptide occupies residues methionine 1 to alanine 26. A propeptide spanning residues aspartate 27 to glycine 72 is cleaved from the precursor. Glutamine 73 carries the post-translational modification Pyrrolidone carboxylic acid. At tyrosine 76 the chain carries Sulfotyrosine. Phenylalanine 82 bears the Phenylalanine amide mark. Residues aspartate 86–glycine 87 constitute a propeptide that is removed on maturation. Residue glutamine 88 is modified to Pyrrolidone carboxylic acid. A Sulfotyrosine modification is found at tyrosine 91. Phenylalanine 97 carries the post-translational modification Phenylalanine amide. Residues aspartate 101–glycine 151 constitute a propeptide that is removed on maturation. Glutamine 152 is modified (pyrrolidone carboxylic acid). Residue tyrosine 155 is modified to Sulfotyrosine. Phenylalanine 161 bears the Phenylalanine amide mark. Positions aspartate 165–glycine 215 are excised as a propeptide. The interval leucine 197 to aspartate 233 is disordered. Residue glutamine 216 is modified to Pyrrolidone carboxylic acid. The residue at position 219 (tyrosine 219) is a Sulfotyrosine. Phenylalanine 225 bears the Phenylalanine amide mark. The propeptide occupies asparagine 229–aspartate 233.

Belongs to the gastrin/cholecystokinin family. Expressed by the skin glands.

It is found in the secreted. Its function is as follows. The pharmacological activities of caerulein are quite similar to the physiological activities of gastrin and related peptides. In Xenopus laevis (African clawed frog), this protein is Preprocaerulein type-4.